The primary structure comprises 660 residues: Bifunctional polymyxin resistance protein ArnA (660 aa).

Residues 1–304 (MKTVVFAYHD…TLGLVQGSRL (304 aa)) form a formyltransferase ArnAFT region. 86–88 (HLI) provides a ligand contact to (6R)-10-formyltetrahydrofolate. His-104 acts as the Proton donor; for formyltransferase activity in catalysis. (6R)-10-formyltetrahydrofolate contacts are provided by residues Arg-114 and 136-140 (VKRAD). A dehydrogenase ArnADH region spans residues 314–660 (RRTRVLILGV…RTVDLTDKPS (347 aa)). NAD(+) is bound by residues Asp-347 and 368-369 (DI). UDP-alpha-D-glucuronate-binding positions include Ala-393, Tyr-398, and 432–433 (TS). Glu-434 acts as the Proton acceptor; for decarboxylase activity in catalysis. Residues Arg-460, Asn-492, 526–535 (KLIDGGKQKR), and Tyr-613 contribute to the UDP-alpha-D-glucuronate site. Catalysis depends on Arg-619, which acts as the Proton donor; for decarboxylase activity.

It in the N-terminal section; belongs to the Fmt family. UDP-L-Ara4N formyltransferase subfamily. This sequence in the C-terminal section; belongs to the NAD(P)-dependent epimerase/dehydratase family. UDP-glucuronic acid decarboxylase subfamily. As to quaternary structure, homohexamer, formed by a dimer of trimers.

It carries out the reaction UDP-alpha-D-glucuronate + NAD(+) = UDP-beta-L-threo-pentopyranos-4-ulose + CO2 + NADH. The enzyme catalyses UDP-4-amino-4-deoxy-beta-L-arabinose + (6R)-10-formyltetrahydrofolate = UDP-4-deoxy-4-formamido-beta-L-arabinose + (6S)-5,6,7,8-tetrahydrofolate + H(+). It participates in nucleotide-sugar biosynthesis; UDP-4-deoxy-4-formamido-beta-L-arabinose biosynthesis; UDP-4-deoxy-4-formamido-beta-L-arabinose from UDP-alpha-D-glucuronate: step 1/3. Its pathway is nucleotide-sugar biosynthesis; UDP-4-deoxy-4-formamido-beta-L-arabinose biosynthesis; UDP-4-deoxy-4-formamido-beta-L-arabinose from UDP-alpha-D-glucuronate: step 3/3. The protein operates within bacterial outer membrane biogenesis; lipopolysaccharide biosynthesis. Functionally, bifunctional enzyme that catalyzes the oxidative decarboxylation of UDP-glucuronic acid (UDP-GlcUA) to UDP-4-keto-arabinose (UDP-Ara4O) and the addition of a formyl group to UDP-4-amino-4-deoxy-L-arabinose (UDP-L-Ara4N) to form UDP-L-4-formamido-arabinose (UDP-L-Ara4FN). The modified arabinose is attached to lipid A and is required for resistance to polymyxin and cationic antimicrobial peptides. The polypeptide is Bifunctional polymyxin resistance protein ArnA (Escherichia coli O127:H6 (strain E2348/69 / EPEC)).